Consider the following 799-residue polypeptide: Zinc finger X-chromosomal protein (799 aa).

Phosphoserine is present on Ser-269. 13 consecutive C2H2-type zinc fingers follow at residues 419–444, 450–472, 482–504, 513–536, 542–564, 570–593, 599–621, 627–650, 656–678, 684–707, 713–735, 741–764, and 770–792; these read YPCM…HPEH, YRCT…LESH, IECD…KMVH, HKCK…LAVH, HICV…MRIH, YECQ…KTKH, FKCD…ALVH, HQCL…ISVH, HKCD…VAAH, HQCR…LSVH, FRCK…MKTH, YQCE…ISIH, and HRCE…IMRH.

This sequence belongs to the krueppel C2H2-type zinc-finger protein family. ZFX/ZFY subfamily.

The protein localises to the nucleus. Probable transcriptional activator. The chain is Zinc finger X-chromosomal protein (Zfx) from Mus musculus (Mouse).